A 474-amino-acid polypeptide reads, in one-letter code: tRNA (guanine(37)-N(1))-methyltransferase (474 aa).

S-adenosyl-L-methionine-binding positions include histidine 234, 274–275 (DL), 303–304 (DA), and asparagine 345. Positions 452 to 464 (EPEAQCESEEAEE) are enriched in acidic residues. Positions 452–474 (EPEAQCESEEAEEPSSKRIKVDT) are disordered. The segment covering 465 to 474 (PSSKRIKVDT) has biased composition (basic and acidic residues).

It belongs to the class I-like SAM-binding methyltransferase superfamily. TRM5/TYW2 family. In terms of assembly, monomer.

The protein localises to the mitochondrion matrix. It is found in the nucleus. It localises to the cytoplasm. The catalysed reaction is guanosine(37) in tRNA + S-adenosyl-L-methionine = N(1)-methylguanosine(37) in tRNA + S-adenosyl-L-homocysteine + H(+). Its function is as follows. Specifically methylates the N1 position of guanosine-37 in various cytoplasmic and mitochondrial tRNAs. Methylation is not dependent on the nature of the nucleoside 5' of the target nucleoside. This is the first step in the biosynthesis of wybutosine (yW), a modified base adjacent to the anticodon of tRNAs and required for accurate decoding. The protein is tRNA (guanine(37)-N(1))-methyltransferase of Caenorhabditis elegans.